Reading from the N-terminus, the 302-residue chain is Recombination-associated protein RdgC (302 aa).

It belongs to the RdgC family.

It localises to the cytoplasm. The protein resides in the nucleoid. Its function is as follows. May be involved in recombination. In Actinobacillus pleuropneumoniae serotype 3 (strain JL03), this protein is Recombination-associated protein RdgC.